The following is a 407-amino-acid chain: E3 ubiquitin-protein ligase TRIM13 (407 aa).

The RING-type zinc finger occupies 10 to 58; sequence CPICCSLFDDPRVLPCSHNFCKKCLEGLLEGNVRNSLWRPSPFKCPTCR. The B box-type zinc finger occupies 89–131; sequence PKMPVCKGHLGQPLNIFCVTDMQLICGICATRGEHTKHVFSSI. Cys-94, His-97, Cys-117, and His-123 together coordinate Zn(2+). A coiled-coil region spans residues 172–200; that stretch reads LQLLTKDSDKVKEFFEKLQHTLDQKKNEI. Residues 316–336 traverse the membrane as a helical segment; it reads LLLMMVVLLGLLIFFGPTVFL.

It belongs to the TRIM/RBCC family. As to quaternary structure, interacts (via C-terminal domain) with VCP. Interacts with AKT1; the interaction ubiquitinates AKT1 and leads to its proteasomal degradation. Interacts with MDM2; the interaction ubiquitinates AKT1 and leads to its proteasomal degradation. Interacts with p62/SQSTM1. Interacts with TRAF6. Interacts with IKBKG/NEMO. Auto-ubiquitinated; requires the RING-type zinc finger. Auto-polyubiquitination leads to proteasomal degradation.

It is found in the endoplasmic reticulum membrane. The enzyme catalyses S-ubiquitinyl-[E2 ubiquitin-conjugating enzyme]-L-cysteine + [acceptor protein]-L-lysine = [E2 ubiquitin-conjugating enzyme]-L-cysteine + N(6)-ubiquitinyl-[acceptor protein]-L-lysine.. It functions in the pathway protein modification; protein ubiquitination. Functionally, endoplasmic reticulum (ER) membrane anchored E3 ligase involved in the retrotranslocation and turnover of membrane and secretory proteins from the ER through a set of processes named ER-associated degradation (ERAD). This process acts on misfolded proteins as well as in the regulated degradation of correctly folded proteins. Enhances ionizing radiation-induced p53/TP53 stability and apoptosis via ubiquitinating MDM2 and AKT1 and decreasing AKT1 kinase activity through MDM2 and AKT1 proteasomal degradation. Regulates ER stress-induced autophagy, and may act as a tumor suppressor. Also plays a role in innate immune response by stimulating NF-kappa-B activity in the TLR2 signaling pathway. Ubiquitinates TRAF6 via the 'Lys-29'-linked polyubiquitination chain resulting in NF-kappa-B activation. Participates as well in T-cell receptor-mediated NF-kappa-B activation. In the presence of TNF, modulates the IKK complex by regulating IKBKG/NEMO ubiquitination leading to the repression of NF-kappa-B. This chain is E3 ubiquitin-protein ligase TRIM13 (Trim13), found in Mus musculus (Mouse).